A 422-amino-acid chain; its full sequence is MTVTIENIHAREIFDSRGNPTVEVDVRLTDGTLGRAAVPSGASTGDREAVELRDGGARLQGKGVSKAVANVNGEIYEALKGQSPFNQAKLDHLMIELDGTENKSCLGANAILGVSMAIFRAAANSEKIPLYRYFGGVDLELPQPFFNVINGGVHADSGIDVQEFLITPVKRDSFRDGLKKIANIYHTLKKILSDKGLKTPVGDEGGFAPKLGTTENAIAILYQPIDSAGYFPGEKIAIAIDSSSIEFYDDKKKFYRFEGKNLTSKELLTYYDNLVEKYPALISIEDGFSEHDWEGFAAQTKARGQKIQLVGDDIFVTNPTIFKEGIKKNVANAILIKLNQIGTVTETIETISLARKAGYKTMISHRSGETVDSYIADFSVAMHAGQIKSGSMARSERVEKYNQLLRIEEDLGKDVALAQFPG.

Position 162 (glutamine 162) interacts with (2R)-2-phosphoglycerate. The Proton donor role is filled by glutamate 204. Mg(2+) is bound by residues aspartate 241, glutamate 285, and aspartate 312. Positions 337, 366, 367, and 388 each coordinate (2R)-2-phosphoglycerate. The active-site Proton acceptor is lysine 337.

Belongs to the enolase family. Mg(2+) is required as a cofactor.

The protein resides in the cytoplasm. The protein localises to the secreted. It localises to the cell surface. It carries out the reaction (2R)-2-phosphoglycerate = phosphoenolpyruvate + H2O. It functions in the pathway carbohydrate degradation; glycolysis; pyruvate from D-glyceraldehyde 3-phosphate: step 4/5. Its function is as follows. Catalyzes the reversible conversion of 2-phosphoglycerate (2-PG) into phosphoenolpyruvate (PEP). It is essential for the degradation of carbohydrates via glycolysis. This Streptococcus thermophilus protein is Enolase.